The following is a 376-amino-acid chain: Succinyl-diaminopimelate desuccinylase (376 aa).

Histidine 67 contacts Zn(2+). Aspartate 69 is an active-site residue. Aspartate 100 is a Zn(2+) binding site. Glutamate 134 functions as the Proton acceptor in the catalytic mechanism. Positions 135, 163, and 349 each coordinate Zn(2+).

It belongs to the peptidase M20A family. DapE subfamily. Homodimer. It depends on Zn(2+) as a cofactor. Co(2+) serves as cofactor.

It carries out the reaction N-succinyl-(2S,6S)-2,6-diaminopimelate + H2O = (2S,6S)-2,6-diaminopimelate + succinate. It participates in amino-acid biosynthesis; L-lysine biosynthesis via DAP pathway; LL-2,6-diaminopimelate from (S)-tetrahydrodipicolinate (succinylase route): step 3/3. Its function is as follows. Catalyzes the hydrolysis of N-succinyl-L,L-diaminopimelic acid (SDAP), forming succinate and LL-2,6-diaminopimelate (DAP), an intermediate involved in the bacterial biosynthesis of lysine and meso-diaminopimelic acid, an essential component of bacterial cell walls. In Xanthomonas campestris pv. campestris (strain B100), this protein is Succinyl-diaminopimelate desuccinylase.